Consider the following 227-residue polypeptide: Cytidylate kinase (227 aa).

An ATP-binding site is contributed by 10 to 18 (GPSGSGKGT).

This sequence belongs to the cytidylate kinase family. Type 1 subfamily.

It localises to the cytoplasm. It catalyses the reaction CMP + ATP = CDP + ADP. The enzyme catalyses dCMP + ATP = dCDP + ADP. This chain is Cytidylate kinase, found in Acinetobacter baylyi (strain ATCC 33305 / BD413 / ADP1).